The sequence spans 185 residues: Thymidine kinase (185 aa).

ATP is bound by residues G7–T14 and D83–Q86. E84 acts as the Proton acceptor in catalysis. Zn(2+) is bound by residues C139, C142, C177, and H180.

The protein belongs to the thymidine kinase family. Homotetramer.

Its subcellular location is the cytoplasm. The catalysed reaction is thymidine + ATP = dTMP + ADP + H(+). The chain is Thymidine kinase from Pyrobaculum aerophilum (strain ATCC 51768 / DSM 7523 / JCM 9630 / CIP 104966 / NBRC 100827 / IM2).